The sequence spans 131 residues: Profilin-3 (131 aa).

The protein belongs to the profilin family. Occurs in many kinds of cells as a complex with monomeric actin in a 1:1 ratio.

Its subcellular location is the cytoplasm. The protein localises to the cytoskeleton. Binds to actin and affects the structure of the cytoskeleton. At high concentrations, profilin prevents the polymerization of actin, whereas it enhances it at low concentrations. By binding to PIP2, it inhibits the formation of IP3 and DG. This chain is Profilin-3, found in Lilium longiflorum (Trumpet lily).